The following is a 450-amino-acid chain: Phosphoglucosamine mutase (450 aa).

The Phosphoserine intermediate role is filled by Ser-102. Mg(2+) contacts are provided by Ser-102, Asp-244, Asp-246, and Asp-248. Position 102 is a phosphoserine (Ser-102).

It belongs to the phosphohexose mutase family. It depends on Mg(2+) as a cofactor. In terms of processing, activated by phosphorylation.

The enzyme catalyses alpha-D-glucosamine 1-phosphate = D-glucosamine 6-phosphate. In terms of biological role, catalyzes the conversion of glucosamine-6-phosphate to glucosamine-1-phosphate. This Desulfovibrio desulfuricans (strain ATCC 27774 / DSM 6949 / MB) protein is Phosphoglucosamine mutase.